Consider the following 378-residue polypeptide: Septin-5 (378 aa).

The Septin-type G domain occupies 50 to 323 (KGFDFTLMVA…ENYRAHCIQQ (274 aa)). Positions 60–67 (GESGLGKS) are G1 motif. Residues 60–67 (GESGLGKS), T94, and G120 each bind GTP. Residues 117-120 (DTPG) form a G3 motif region. R177 carries the omega-N-methylarginine modification. The interval 198-201 (AKAD) is G4 motif. 199–207 (KADCLVPSE) serves as a coordination point for GTP. At S234 the chain carries Phosphoserine. Positions 257 and 272 each coordinate GTP. S336 carries the post-translational modification Phosphoserine. T345 is subject to Phosphothreonine. Residues 347-378 (DAETEKLIRMKDEELRRMQEMLQRMKQQMQDQ) adopt a coiled-coil conformation.

Belongs to the TRAFAC class TrmE-Era-EngA-EngB-Septin-like GTPase superfamily. Septin GTPase family. Septins polymerize into heterooligomeric protein complexes that form filaments, and can associate with cellular membranes, actin filaments and microtubules. GTPase activity is required for filament formation. Interacts with SEPTIN2 and SEPTIN5. In platelets, associated with a complex containing STX4. Interacts with PRKN; this interaction leads to SEPTIN5 ubiquitination and degradation. Interacts with DYRK1A. Interacts with STX1A; in the cerebellar cortex. In terms of processing, phosphorylated by DYRK1A.

The protein localises to the cytoplasm. Its subcellular location is the cytoskeleton. Filament-forming cytoskeletal GTPase. May play a role in cytokinesis (Potential). May play a role in platelet secretion. The polypeptide is Septin-5 (Macaca fascicularis (Crab-eating macaque)).